The following is a 552-amino-acid chain: Amino-acid acetyltransferase, mitochondrial (552 aa).

A mitochondrion-targeting transit peptide spans 1-32; sequence MIKTWIRCLTTEVRYHQPNAHGRSLVMSVLNS. Residues 379-545 enclose the N-acetyltransferase domain; it reads QTGKSDPVSK…LRDYAKYVRD (167 aa).

It belongs to the acetyltransferase family.

The protein localises to the mitochondrion. It carries out the reaction L-glutamate + acetyl-CoA = N-acetyl-L-glutamate + CoA + H(+). It participates in amino-acid biosynthesis; L-arginine biosynthesis; N(2)-acetyl-L-ornithine from L-glutamate: step 1/4. N-acetylglutamate synthase involved in arginine biosynthesis. The chain is Amino-acid acetyltransferase, mitochondrial (ARG2) from Kluyveromyces lactis (strain ATCC 8585 / CBS 2359 / DSM 70799 / NBRC 1267 / NRRL Y-1140 / WM37) (Yeast).